Here is a 151-residue protein sequence, read N- to C-terminus: Nucleoside diphosphate kinase (151 aa).

Lysine 11, phenylalanine 59, arginine 87, threonine 93, arginine 104, and asparagine 114 together coordinate ATP. Residue histidine 117 is the Pros-phosphohistidine intermediate of the active site.

Belongs to the NDK family. Mg(2+) is required as a cofactor.

The catalysed reaction is a 2'-deoxyribonucleoside 5'-diphosphate + ATP = a 2'-deoxyribonucleoside 5'-triphosphate + ADP. It catalyses the reaction a ribonucleoside 5'-diphosphate + ATP = a ribonucleoside 5'-triphosphate + ADP. Major role in the synthesis of nucleoside triphosphates other than ATP. The ATP gamma phosphate is transferred to the NDP beta phosphate via a ping-pong mechanism, using a phosphorylated active-site intermediate. The chain is Nucleoside diphosphate kinase (NDK1) from Eremothecium gossypii (strain ATCC 10895 / CBS 109.51 / FGSC 9923 / NRRL Y-1056) (Yeast).